Reading from the N-terminus, the 177-residue chain is uncharacterized protein (177 aa).

The next 4 helical transmembrane spans lie at 4–24 (IIIL…GFIL), 33–53 (ILSI…LHWI), 80–100 (IAFI…GSFL), and 115–135 (MLGA…LLYV).

The protein localises to the cell membrane. This is an uncharacterized protein from Bacillus subtilis (strain 168).